A 99-amino-acid chain; its full sequence is Large ribosomal subunit protein eL36 (99 aa).

The protein belongs to the eukaryotic ribosomal protein eL36 family. Component of the large ribosomal subunit. Mature ribosomes consist of a small (40S) and a large (60S) subunit. The 40S subunit contains about 32 different proteins and 1 molecule of RNA (18S). The 60S subunit contains 45 different proteins and 3 molecules of RNA (25S, 5.8S and 5S).

The protein resides in the cytoplasm. In terms of biological role, component of the ribosome, a large ribonucleoprotein complex responsible for the synthesis of proteins in the cell. The small ribosomal subunit (SSU) binds messenger RNAs (mRNAs) and translates the encoded message by selecting cognate aminoacyl-transfer RNA (tRNA) molecules. The large subunit (LSU) contains the ribosomal catalytic site termed the peptidyl transferase center (PTC), which catalyzes the formation of peptide bonds, thereby polymerizing the amino acids delivered by tRNAs into a polypeptide chain. The nascent polypeptides leave the ribosome through a tunnel in the LSU and interact with protein factors that function in enzymatic processing, targeting, and the membrane insertion of nascent chains at the exit of the ribosomal tunnel. The polypeptide is Large ribosomal subunit protein eL36 (Candida albicans (strain SC5314 / ATCC MYA-2876) (Yeast)).